We begin with the raw amino-acid sequence, 273 residues long: Giardin subunit beta (273 aa).

The interval 1-19 (MSMFTSTRTLTQTMDKPDD) is nonhelical region. The interval 20–273 (LTRSATETAV…GGLSMVTKHQ (254 aa)) is rod. Coiled-coil stretches lie at residues 123–175 (DTLN…YDQL) and 211–263 (NTKL…SKIQ).

Belongs to the SF-assemblin family. In terms of assembly, interacts with BOP1 (via C-terminal WD repeats).

The protein localises to the cytoplasm. Its subcellular location is the cytoskeleton. Giardins are involved in parasite attachment to the intestinal mucosa and in the cytoskeletal disassembly and reassembly that marks the transition from infectious trophozoite to transmissible cyst. They may interact with other cytoskeletal proteins such as microtubules in the microribbons or crossbridges, to maintain the integrity of the ventral disk. The polypeptide is Giardin subunit beta (Giardia intestinalis (Giardia lamblia)).